Consider the following 280-residue polypeptide: Chlorophyll a-b binding protein CP26, chloroplastic (280 aa).

The transit peptide at 1–48 directs the protein to the chloroplast; that stretch reads MASLGVSEMLGTPLNFRAVSRSSAPLASSPSTFKTVALFSKKKPAPAK. Chlorophyll b is bound at residue Phe-70. Tyr-95, Glu-114, and His-117 together coordinate chlorophyll a. The next 2 helical transmembrane spans lie at 110–130 and 167–187; these read YQAFELIHARWAMLGAAGFII and IPINLVLAVVAEVVLLGGAEY. 4 residues coordinate chlorophyll b: Arg-119, Ile-167, Glu-186, and Arg-189. The chlorophyll a site is built by Lys-224, Glu-225, Asn-228, Arg-230, Gln-242, and His-257. The helical transmembrane segment at 231 to 251 threads the bilayer; sequence LAMFAMLGFFIQAYVTGEGPV.

It belongs to the light-harvesting chlorophyll a/b-binding (LHC) protein family. In terms of assembly, forms heterotrimers with LHCB3. The LHC complex consists of chlorophyll a-b binding proteins. Requires Binds at least 14 chlorophylls (8 Chl-a and 6 Chl-b) and carotenoids such as lutein and neoxanthin. as cofactor. Photoregulated by reversible phosphorylation of its threonine residues.

It is found in the plastid. It localises to the chloroplast thylakoid membrane. Functionally, the light-harvesting complex (LHC) functions as a light receptor, it captures and delivers excitation energy to photosystems with which it is closely associated. This is Chlorophyll a-b binding protein CP26, chloroplastic (LHCB5) from Arabidopsis thaliana (Mouse-ear cress).